The following is a 191-amino-acid chain: Elongation factor P-like protein (191 aa).

This sequence belongs to the elongation factor P family.

This is Elongation factor P-like protein from Shewanella sediminis (strain HAW-EB3).